Here is a 134-residue protein sequence, read N- to C-terminus: Ribosome-binding factor A (134 aa).

Belongs to the RbfA family. In terms of assembly, monomer. Binds 30S ribosomal subunits, but not 50S ribosomal subunits or 70S ribosomes.

Its subcellular location is the cytoplasm. One of several proteins that assist in the late maturation steps of the functional core of the 30S ribosomal subunit. Associates with free 30S ribosomal subunits (but not with 30S subunits that are part of 70S ribosomes or polysomes). Required for efficient processing of 16S rRNA. May interact with the 5'-terminal helix region of 16S rRNA. The polypeptide is Ribosome-binding factor A (Bdellovibrio bacteriovorus (strain ATCC 15356 / DSM 50701 / NCIMB 9529 / HD100)).